The primary structure comprises 134 residues: Small ribosomal subunit protein uS11 (134 aa).

It belongs to the universal ribosomal protein uS11 family. As to quaternary structure, part of the 30S ribosomal subunit. Interacts with proteins S7 and S18. Binds to IF-3.

Its function is as follows. Located on the platform of the 30S subunit, it bridges several disparate RNA helices of the 16S rRNA. Forms part of the Shine-Dalgarno cleft in the 70S ribosome. The protein is Small ribosomal subunit protein uS11 of Variovorax paradoxus (strain S110).